The chain runs to 399 residues: PCI domain-containing protein 2 (399 aa).

The 182-residue stretch at 210–391 (VTFKYYVGRK…QKLVVSKQNP (182 aa)) folds into the PCI domain.

It belongs to the CSN12 family.

The protein is PCI domain-containing protein 2 (pcid2) of Xenopus laevis (African clawed frog).